Reading from the N-terminus, the 97-residue chain is Ribosomal biogenesis factor (97 aa).

A Phosphoserine modification is found at S19. K21 carries the N6-acetyllysine modification. S69 is modified (phosphoserine).

In terms of assembly, associates with the pre-60S ribosomal particles.

It is found in the nucleus. The protein resides in the nucleolus. Trans-acting factor in ribosome biogenesis required for efficient 40S and 60S subunit production. This Mus musculus (Mouse) protein is Ribosomal biogenesis factor (Rbis).